The primary structure comprises 103 residues: Defensin-like protein 290 (103 aa).

The N-terminal stretch at 1–29 is a signal peptide; sequence MTALRRTISIIFVFYLSCTLFVNIFGVQA. 6 disulfide bridges follow: Cys-33–Cys-50, Cys-39–Cys-55, Cys-43–Cys-57, Cys-72–Cys-92, Cys-78–Cys-98, and Cys-84–Cys-100.

It belongs to the DEFL family.

Its subcellular location is the secreted. The protein is Defensin-like protein 290 of Arabidopsis thaliana (Mouse-ear cress).